The chain runs to 1125 residues: Probable inorganic carbon transporter subunit DabA (1125 aa).

Zn(2+) is bound by residues cysteine 578, aspartate 580, histidine 769, and cysteine 784. The disordered stretch occupies residues 1106-1125 (SDPRPPALVEPKQTETHHAA).

The protein belongs to the inorganic carbon transporter (TC 9.A.2) DabA family. In terms of assembly, forms a complex with DabB. Zn(2+) serves as cofactor.

It localises to the cell inner membrane. Part of an energy-coupled inorganic carbon pump. The sequence is that of Probable inorganic carbon transporter subunit DabA from Nitrosococcus oceani (strain ATCC 19707 / BCRC 17464 / JCM 30415 / NCIMB 11848 / C-107).